The following is a 985-amino-acid chain: Eukaryotic translation initiation factor 4E transporter (985 aa).

The disordered stretch occupies residues 1–24; sequence MDRRSMGETESGDAFLDLKKPPAS. Phosphoserine is present on Ser5. Positions 30-36 match the YXXXXLphi motif motif; the sequence is YTKEELL. Ser74, Ser78, Ser115, Ser120, Ser136, and Ser138 each carry phosphoserine. The tract at residues 131–161 is interaction with CSDE1; that stretch reads VSSRRSGSPLEKDSDGLRLLGGRRIGSGRII. Residues 195-211 carry the Nuclear localization signal motif; the sequence is RREFGDSKRVFGERRRN. Residues 208–230 are disordered; sequence RRRNDSYTEEEPEWFSAGPTSQS. The interaction with DDX6 stretch occupies residues 219-240; that stretch reads PEWFSAGPTSQSETIELTGFDD. Phosphoserine is present on residues Ser301, Ser345, Ser353, and Ser374. Lys410 participates in a covalent cross-link: Glycyl lysine isopeptide (Lys-Gly) (interchain with G-Cter in SUMO2). At Ser417 the chain carries Phosphoserine. Positions 438 to 447 match the Nuclear export signal motif; it reads VEAGLKGLKV. The interval 448–490 is interaction with LSM14A; that stretch reads DQQVKNSTPFMAEHLEETLSAVTNNRQLKKDGDMTAFNKLVST. The residue at position 486 (Lys486) is an N6-acetyllysine. Phosphoserine is present on residues Ser513, Ser564, and Ser587. A Nuclear export signal motif is present at residues 613 to 638; sequence ITAQMSQLELQQAALEGLALPHDLAV. 2 disordered regions span residues 664–693 and 707–803; these read QQRV…SMLS and ESKE…PTTP. Ser693 is subject to Phosphoserine. Positions 695–713 are interaction with PATL1; the sequence is SFTPTSVIRKMYESKEKSK. Basic and acidic residues-rich tracts occupy residues 707 to 717 and 725 to 735; these read ESKEKSKEEPA and DSKEDTQKASE. Positions 736-746 are enriched in low complexity; it reads ENLLSSSSVPS. Position 752 is a phosphoserine (Ser752). Residues 754–776 show a composition bias toward polar residues; that stretch reads TTNSKLSALQRSSCSTPLSQANR. Ser920 and Ser951 each carry phosphoserine. Residues 922–953 form a disordered region; that stretch reads QTTPQNVPSRSGLPHMHSQLEHRPSQRSSSPV. An interaction with LSM14A region spans residues 940–985; that stretch reads QLEHRPSQRSSSPVGLAKWFGSDVLQQPLPSMPAKVISVDELEYRQ.

Belongs to the 4E-T/EIF4E-T family. As to quaternary structure, interacts (via YXXXXLphi motif) with EIF4E. Interacts (via YXXXXLphi motif) with EIF4E2. Interacts with DDX6. Interacts with CSDE1/UNR. Interacts with CNOT1; promoting association with the CCR4-NOT complex. Interacts with LSM14A; promoting EIF4ENIF1 localization to P-bodies. Interacts with PATL1. Interacts with importin beta only in the presence of importin alpha, suggesting a direct interaction with importin alpha. Interacts with APOBEC3G in an RNA-dependent manner. In terms of processing, phosphorylation by MAPK8/JNK1 and or MAPK9/JNK2 in response to oxidative stress promotes P-body assembly. Phosphorylated during meiotic maturation. In terms of tissue distribution, widely expressed.

The protein localises to the cytoplasm. The protein resides in the P-body. Its subcellular location is the nucleus. It localises to the PML body. It is found in the nucleus speckle. In terms of biological role, EIF4E-binding protein that regulates translation and stability of mRNAs in processing bodies (P-bodies). Plays a key role in P-bodies to coordinate the storage of translationally inactive mRNAs in the cytoplasm and prevent their degradation. Acts as a binding platform for multiple RNA-binding proteins: promotes deadenylation of mRNAs via its interaction with the CCR4-NOT complex, and blocks decapping via interaction with eIF4E (EIF4E and EIF4E2), thereby protecting deadenylated and repressed mRNAs from degradation. Component of a multiprotein complex that sequesters and represses translation of proneurogenic factors during neurogenesis. Promotes miRNA-mediated translational repression. Required for the formation of P-bodies. Involved in mRNA translational repression mediated by the miRNA effector TNRC6B by protecting TNRC6B-targeted mRNAs from decapping and subsequent decay. Also acts as a nucleoplasmic shuttling protein, which mediates the nuclear import of EIF4E and DDX6 by a piggy-back mechanism. In Homo sapiens (Human), this protein is Eukaryotic translation initiation factor 4E transporter.